The chain runs to 250 residues: Phosphatidylglycerol--prolipoprotein diacylglyceryl transferase (250 aa).

Helical transmembrane passes span 11–31 (LAIR…LLLA), 49–69 (FLIA…IFEF), 84–104 (QGGL…YIYL), and 109–129 (ESFF…QAIG). Arg-130 is a binding site for a 1,2-diacyl-sn-glycero-3-phospho-(1'-sn-glycerol). A run of 3 helical transmembrane segments spans residues 169–189 (PTFL…VYLL), 196–216 (GIVF…IEGL), and 228–248 (VAQL…YNII).

This sequence belongs to the Lgt family.

It localises to the cell membrane. The catalysed reaction is L-cysteinyl-[prolipoprotein] + a 1,2-diacyl-sn-glycero-3-phospho-(1'-sn-glycerol) = an S-1,2-diacyl-sn-glyceryl-L-cysteinyl-[prolipoprotein] + sn-glycerol 1-phosphate + H(+). It functions in the pathway protein modification; lipoprotein biosynthesis (diacylglyceryl transfer). Functionally, catalyzes the transfer of the diacylglyceryl group from phosphatidylglycerol to the sulfhydryl group of the N-terminal cysteine of a prolipoprotein, the first step in the formation of mature lipoproteins. In Clostridium botulinum (strain 657 / Type Ba4), this protein is Phosphatidylglycerol--prolipoprotein diacylglyceryl transferase.